A 377-amino-acid chain; its full sequence is Porphobilinogen deaminase (377 aa).

At Cys-269 the chain carries S-(dipyrrolylmethanemethyl)cysteine.

It belongs to the HMBS family. As to quaternary structure, monomer. Requires dipyrromethane as cofactor.

It catalyses the reaction 4 porphobilinogen + H2O = hydroxymethylbilane + 4 NH4(+). It participates in porphyrin-containing compound metabolism; protoporphyrin-IX biosynthesis; coproporphyrinogen-III from 5-aminolevulinate: step 2/4. Tetrapolymerization of the monopyrrole PBG into the hydroxymethylbilane pre-uroporphyrinogen in several discrete steps. This is Porphobilinogen deaminase from Micrococcus luteus (strain ATCC 4698 / DSM 20030 / JCM 1464 / CCM 169 / CCUG 5858 / IAM 1056 / NBRC 3333 / NCIMB 9278 / NCTC 2665 / VKM Ac-2230) (Micrococcus lysodeikticus).